The primary structure comprises 183 residues: MSNSHHTSQGRRNKLSVWVKKIINTTTTTNASVSSSKPRRGTRAGPTRVKRAELDPDGTTISSSLRPLVDRNSLHSSESDDEGDRRVAWDEPPTGKVRQQQQQQQQQQNDNASVIPLVSFCSSSVKSSTFSDIHSIQSTRPTIFSNRTFETNSSVLAIPPQSILDRSRTLPPSNASNTTTRRP.

A Glycyl lysine isopeptide (Lys-Gly) (interchain with G-Cter in ubiquitin) cross-link involves residue Lys-21. Disordered regions lie at residues 24-111 (NTTT…QNDN) and 160-183 (PQSI…TRRP). Residues 99-108 (QQQQQQQQQQ) show a composition bias toward low complexity. The segment covering 170-183 (LPPSNASNTTTRRP) has biased composition (polar residues).

It is found in the cytoplasm. This is an uncharacterized protein from Saccharomyces cerevisiae (strain ATCC 204508 / S288c) (Baker's yeast).